Here is a 284-residue protein sequence, read N- to C-terminus: MRSVGNVDLTIGLVTVPVKMVGVSESHDRKASMYHPHEDGNFGKIKMPKLCEDCGEVVPTADIAKGFEEGGDIVILTADELASIAAATGAALEVPQFVKAEQINPMLFANENIYRLVPDPKRGRQAATTYLMVRHILVSQELVGVVQYTRWGRNRLGVLDVEPSDDGGVLVIRNMMWADELRSTEGIVPTNVTEDDIDPRLLPVMASVVESMTGDWDPTAYTDRYTEQLSEAITAKAQGDEIATVASESGKAIDDVSDLLAKLEASIQKKAPAKKATARRKKTA.

The 180-residue stretch at Thr10–Pro189 folds into the Ku domain.

As to quaternary structure, homodimer. Interacts with host LigD.

Required for replication of viruses with short cos ends (4 bases). Stimulates dsDNA end-joining by host LigD. Binds dsDNA with either blunt, 5'- or 3-overhangs, protecting it from host exonuclease degradation. This is Protein Ku (87) from Mycobacterium phage Corndog (Mycobacteriophage Corndog).